Consider the following 66-residue polypeptide: Large ribosomal subunit protein uL29 (66 aa).

Belongs to the universal ribosomal protein uL29 family.

This Helicobacter pylori (strain P12) protein is Large ribosomal subunit protein uL29.